Reading from the N-terminus, the 463-residue chain is tRNA dimethylallyltransferase 9 (463 aa).

57–64 serves as a coordination point for ATP; the sequence is GPTGAGKS. 59 to 64 contacts substrate; that stretch reads TGAGKS. The interaction with substrate tRNA stretch occupies residues 82 to 85; that stretch reads DSVQ.

This sequence belongs to the IPP transferase family. It depends on Mg(2+) as a cofactor. Expressed ubiquitously, with highest expression in proliferating tissues.

Its subcellular location is the cytoplasm. The enzyme catalyses adenosine(37) in tRNA + dimethylallyl diphosphate = N(6)-dimethylallyladenosine(37) in tRNA + diphosphate. Its function is as follows. Catalyzes the transfer of a dimethylallyl group onto the adenine at position 37 in tRNAs that read codons beginning with uridine, leading to the formation of N6-(dimethylallyl)adenosine (i(6)A). Involved in the cis-type cytokinin biosynthesis. The sequence is that of tRNA dimethylallyltransferase 9 (IPT9) from Arabidopsis thaliana (Mouse-ear cress).